The primary structure comprises 703 residues: Elongation factor G 1 (703 aa).

The tr-type G domain maps to 8 to 291 (ERYRNIGISA…AVIDYLPSPV (284 aa)). Residues 17–24 (AHIDAGKT), 88–92 (DTPGH), and 142–145 (NKMD) each bind GTP.

Belongs to the TRAFAC class translation factor GTPase superfamily. Classic translation factor GTPase family. EF-G/EF-2 subfamily.

The protein resides in the cytoplasm. Functionally, catalyzes the GTP-dependent ribosomal translocation step during translation elongation. During this step, the ribosome changes from the pre-translocational (PRE) to the post-translocational (POST) state as the newly formed A-site-bound peptidyl-tRNA and P-site-bound deacylated tRNA move to the P and E sites, respectively. Catalyzes the coordinated movement of the two tRNA molecules, the mRNA and conformational changes in the ribosome. The protein is Elongation factor G 1 of Burkholderia orbicola (strain AU 1054).